The sequence spans 146 residues: 3-dehydroquinate dehydratase (146 aa).

Tyr-23 acts as the Proton acceptor in catalysis. Substrate contacts are provided by Asn-75, His-81, and Asp-88. The active-site Proton donor is the His-101. Residues 102-103 (LS) and Arg-112 each bind substrate.

It belongs to the type-II 3-dehydroquinase family. Homododecamer.

The enzyme catalyses 3-dehydroquinate = 3-dehydroshikimate + H2O. It participates in metabolic intermediate biosynthesis; chorismate biosynthesis; chorismate from D-erythrose 4-phosphate and phosphoenolpyruvate: step 3/7. In terms of biological role, catalyzes a trans-dehydration via an enolate intermediate. The protein is 3-dehydroquinate dehydratase of Saccharophagus degradans (strain 2-40 / ATCC 43961 / DSM 17024).